Reading from the N-terminus, the 62-residue chain is Large ribosomal subunit protein bL28 (62 aa).

Belongs to the bacterial ribosomal protein bL28 family.

This chain is Large ribosomal subunit protein bL28, found in Moorella thermoacetica (strain ATCC 39073 / JCM 9320).